We begin with the raw amino-acid sequence, 392 residues long: MRALLFDPYCGASGDMILGALIDLGADLEYVRSAVESVGCRLEVNERRFDHIRAIRVKVISDKSFRSLGGAIDILKASALTSRALERALRILDIMASAESKVHGVDRENARFHEMGSLDALADIAGSCAAMESLDVKRILSIAPSVGGGITDTSHGMLPVPAPATLEILRSHRIPWRGGPVAHELLTPTGAAILAASVDTFLDHHPEIVTERVGYGAGSREIGMPNLLRAILGEIPHHMQHDRVVQIETNVDDVTGEILGSLIDMLMKEGALDVTVVPAVMKKGRSGSVISIISRENDARKLSAVLMRETGSLGVRVFPALHRLIAERRIESVEVMGRSVPVKIGSIGGEIISVKPEHDVCRRIAEELNIPVKDIIRIASEKGWRIAGRKID.

The protein belongs to the LarC family.

This is Putative nickel insertion protein from Methanothrix thermoacetophila (strain DSM 6194 / JCM 14653 / NBRC 101360 / PT) (Methanosaeta thermophila).